A 642-amino-acid polypeptide reads, in one-letter code: Conserved oligomeric Golgi complex subunit 6 (642 aa).

Belongs to the COG6 family. As to quaternary structure, component of the conserved oligomeric Golgi complex which is composed of eight different subunits and is required for normal Golgi morphology and localization.

It is found in the golgi apparatus membrane. Required for normal Golgi function. This chain is Conserved oligomeric Golgi complex subunit 6 (cogc-6), found in Caenorhabditis elegans.